The following is a 71-amino-acid chain: 26S proteasome complex subunit rpn15 (71 aa).

The interval 1–38 (MSRAALPSLENLEDDDEFEDFATENWPMKDTELDTGDD) is disordered. Over residues 11–22 (NLEDDDEFEDFA) the composition is skewed to acidic residues. A UBS-II region spans residues 16-25 (DEFEDFATEN). The UBS-I stretch occupies residues 38-49 (DTLWENNWDDED).

It belongs to the DSS1/SEM1 family. Interacts with mlo3, rae1, nup98/nup189 and nup146. Interacts with rad24. Interacts (via UBSs) with ubiquitin (ubi3/ubi5).

It localises to the cytoplasm. The protein resides in the nucleus. Its function is as follows. Versatile protein that might stabilize multiple protein complexes involved in diverse pathways. Subunit of the 26S proteasome which plays a role in ubiquitin-dependent proteolysis. Acts as a ubiquitin receptor of the 26S proteasome, by interacting with ubiquitin chains linked by 'Lys-63' and 'Lys-48'. Involved in nuclear export of specific sets of mRNAs. Links the mRNA adapter mlo3 to rae1 for targeting mRNA-protein complex to the proteins of the nucleoporin complex (NPC). Involved in recombinational repair of DNA. Plays a critical role in linking repair and checkpoint factors to damaged DNA sites by specifically recruiting rad24 and cdc25 to the DSBs. The polypeptide is 26S proteasome complex subunit rpn15 (rpn15) (Schizosaccharomyces pombe (strain 972 / ATCC 24843) (Fission yeast)).